The sequence spans 945 residues: Isoleucine--tRNA ligase (945 aa).

A 'HIGH' region motif is present at residues 66–76; sequence PYANGDIHLGH. Position 581 (glutamate 581) interacts with L-isoleucyl-5'-AMP. Residues 622–626 carry the 'KMSKS' region motif; that stretch reads KMSKS. Lysine 625 lines the ATP pocket. Zn(2+) contacts are provided by cysteine 908, cysteine 911, cysteine 928, and cysteine 931.

Belongs to the class-I aminoacyl-tRNA synthetase family. IleS type 1 subfamily. Monomer. The cofactor is Zn(2+).

The protein localises to the cytoplasm. The catalysed reaction is tRNA(Ile) + L-isoleucine + ATP = L-isoleucyl-tRNA(Ile) + AMP + diphosphate. Catalyzes the attachment of isoleucine to tRNA(Ile). As IleRS can inadvertently accommodate and process structurally similar amino acids such as valine, to avoid such errors it has two additional distinct tRNA(Ile)-dependent editing activities. One activity is designated as 'pretransfer' editing and involves the hydrolysis of activated Val-AMP. The other activity is designated 'posttransfer' editing and involves deacylation of mischarged Val-tRNA(Ile). The sequence is that of Isoleucine--tRNA ligase from Burkholderia vietnamiensis (strain G4 / LMG 22486) (Burkholderia cepacia (strain R1808)).